A 481-amino-acid polypeptide reads, in one-letter code: Protein JASON (481 aa).

The tract at residues 226–250 is disordered; the sequence is ECDLDQSNSSNSSENGSSRKPEMGG. The segment covering 232 to 241 has biased composition (low complexity); sequence SNSSNSSENG.

Required for normal spindle orientation at male meiosis II and normal formation of tetrad of microspores. Acts as a positive regulator of PS1 in male sporogenesis. Not involved in female meiosis. In Arabidopsis thaliana (Mouse-ear cress), this protein is Protein JASON.